Consider the following 558-residue polypeptide: UvrABC system protein C (558 aa).

The region spanning 12-92 is the GIY-YIG domain; sequence LLPGVYIFYG…IFNHKPKYNV (81 aa). The UVR domain maps to 200–235; sequence SETLDLIEEKMKKHAKMMDFENAAKYRDLLVKFENV.

This sequence belongs to the UvrC family. Interacts with UvrB in an incision complex.

The protein resides in the cytoplasm. The UvrABC repair system catalyzes the recognition and processing of DNA lesions. UvrC both incises the 5' and 3' sides of the lesion. The N-terminal half is responsible for the 3' incision and the C-terminal half is responsible for the 5' incision. The protein is UvrABC system protein C of Pseudothermotoga lettingae (strain ATCC BAA-301 / DSM 14385 / NBRC 107922 / TMO) (Thermotoga lettingae).